A 92-amino-acid polypeptide reads, in one-letter code: Large ribosomal subunit protein uL24 (92 aa).

Belongs to the universal ribosomal protein uL24 family. Part of the 50S ribosomal subunit.

Functionally, one of two assembly initiator proteins, it binds directly to the 5'-end of the 23S rRNA, where it nucleates assembly of the 50S subunit. One of the proteins that surrounds the polypeptide exit tunnel on the outside of the subunit. This Opitutus terrae (strain DSM 11246 / JCM 15787 / PB90-1) protein is Large ribosomal subunit protein uL24.